A 325-amino-acid chain; its full sequence is 1-aminocyclopropane-1-carboxylate oxidase 2 (325 aa).

The 101-residue stretch at 157-257 folds into the Fe2OG dioxygenase domain; that stretch reads PTFGTKVSNY…RMSIASFYNP (101 aa). Fe cation is bound by residues His181, Asp183, and His238.

The protein belongs to the iron/ascorbate-dependent oxidoreductase family. It depends on Fe cation as a cofactor.

The catalysed reaction is 1-aminocyclopropane-1-carboxylate + L-ascorbate + O2 = ethene + L-dehydroascorbate + hydrogen cyanide + CO2 + 2 H2O. The protein operates within alkene biosynthesis; ethylene biosynthesis via S-adenosyl-L-methionine; ethylene from S-adenosyl-L-methionine: step 2/2. The sequence is that of 1-aminocyclopropane-1-carboxylate oxidase 2 (ACO2) from Doritaenopsis sp. (Moth orchid).